The sequence spans 298 residues: uncharacterized protein (298 aa).

The segment covering 1–17 has biased composition (basic and acidic residues); that stretch reads MLTKSAENKRNRKDDSM. The interval 1-22 is disordered; the sequence is MLTKSAENKRNRKDDSMRPGQQ. Residues 167–227 form the S1 motif domain; it reads NKELTGTVYR…EDGSVNLSLL (61 aa).

This is an uncharacterized protein from Bacillus subtilis (strain 168).